The chain runs to 184 residues: ATP synthase subunit b, chloroplastic (184 aa).

A helical transmembrane segment spans residues 27–49; sequence FATNPINLSVVLGVLIFFGKGVL.

It belongs to the ATPase B chain family. In terms of assembly, F-type ATPases have 2 components, F(1) - the catalytic core - and F(0) - the membrane proton channel. F(1) has five subunits: alpha(3), beta(3), gamma(1), delta(1), epsilon(1). F(0) has four main subunits: a(1), b(1), b'(1) and c(10-14). The alpha and beta chains form an alternating ring which encloses part of the gamma chain. F(1) is attached to F(0) by a central stalk formed by the gamma and epsilon chains, while a peripheral stalk is formed by the delta, b and b' chains.

Its subcellular location is the plastid. The protein localises to the chloroplast thylakoid membrane. Functionally, f(1)F(0) ATP synthase produces ATP from ADP in the presence of a proton or sodium gradient. F-type ATPases consist of two structural domains, F(1) containing the extramembraneous catalytic core and F(0) containing the membrane proton channel, linked together by a central stalk and a peripheral stalk. During catalysis, ATP synthesis in the catalytic domain of F(1) is coupled via a rotary mechanism of the central stalk subunits to proton translocation. Component of the F(0) channel, it forms part of the peripheral stalk, linking F(1) to F(0). In Amborella trichopoda, this protein is ATP synthase subunit b, chloroplastic.